Here is a 234-residue protein sequence, read N- to C-terminus: Putative N-acetylmannosamine-6-phosphate 2-epimerase (234 aa).

It belongs to the NanE family.

It catalyses the reaction an N-acyl-D-glucosamine 6-phosphate = an N-acyl-D-mannosamine 6-phosphate. The protein operates within amino-sugar metabolism; N-acetylneuraminate degradation; D-fructose 6-phosphate from N-acetylneuraminate: step 3/5. Its function is as follows. Converts N-acetylmannosamine-6-phosphate (ManNAc-6-P) to N-acetylglucosamine-6-phosphate (GlcNAc-6-P). This is Putative N-acetylmannosamine-6-phosphate 2-epimerase from Klebsiella pneumoniae (strain 342).